The primary structure comprises 163 residues: General stress protein 16O (163 aa).

Basic and acidic residues predominate over residues Gln19–Glu30. Disordered stretches follow at residues Gln19 to Thr55 and Ala115 to Lys163. The segment at Cys89 to Thr123 adopts a dksA C4-type; degenerate zinc-finger fold. Positions Ser127–Asp146 are enriched in basic and acidic residues.

This chain is General stress protein 16O (yocK), found in Bacillus subtilis (strain 168).